The chain runs to 462 residues: Cytochrome P450 20A1 (462 aa).

Residues phenylalanine 4–proline 24 traverse the membrane as a helical segment. Heme is bound at residue cysteine 409.

The protein belongs to the cytochrome P450 family. Heme serves as cofactor.

The protein localises to the membrane. The sequence is that of Cytochrome P450 20A1 (CYP20A1) from Bos taurus (Bovine).